The following is a 402-amino-acid chain: S-adenosylmethionine synthase (402 aa).

His17 serves as a coordination point for ATP. Asp19 contacts Mg(2+). Glu45 lines the K(+) pocket. L-methionine is bound by residues Glu58 and Gln101. The segment at 101 to 111 (QSSDIADGVNE) is flexible loop. ATP contacts are provided by residues 177–179 (DAK), 244–245 (RF), Asp253, 259–260 (RK), Ala276, and Lys280. An L-methionine-binding site is contributed by Asp253. Lys284 is an L-methionine binding site.

It belongs to the AdoMet synthase family. In terms of assembly, homotetramer; dimer of dimers. It depends on Mg(2+) as a cofactor. Requires K(+) as cofactor.

The protein resides in the cytoplasm. It carries out the reaction L-methionine + ATP + H2O = S-adenosyl-L-methionine + phosphate + diphosphate. It participates in amino-acid biosynthesis; S-adenosyl-L-methionine biosynthesis; S-adenosyl-L-methionine from L-methionine: step 1/1. Functionally, catalyzes the formation of S-adenosylmethionine (AdoMet) from methionine and ATP. The overall synthetic reaction is composed of two sequential steps, AdoMet formation and the subsequent tripolyphosphate hydrolysis which occurs prior to release of AdoMet from the enzyme. In Lactobacillus johnsonii (strain CNCM I-12250 / La1 / NCC 533), this protein is S-adenosylmethionine synthase.